An 86-amino-acid polypeptide reads, in one-letter code: Antitoxin VapB33 (86 aa).

Functionally, antitoxin component of a type II toxin-antitoxin (TA) system. Upon expression in M.smegmatis neutralizes the effect of cognate toxin VapC33. This is Antitoxin VapB33 (vapB33) from Mycobacterium tuberculosis (strain ATCC 25618 / H37Rv).